The primary structure comprises 139 residues: MKFSIAAAVLALASAVVAHPGAGYVSTPEKEANFQQNFQKFVTACGNGNQVSCCNTETKKVGAPLTAGGLIPILDNINLEDFSLLKGCSKVDVAAVIGVQDLLNSNCKTQVSCCKVGDTNQVGLVNANVDLKCAAQNII.

Residues 1–18 form the signal peptide; that stretch reads MKFSIAAAVLALASAVVA. Intrachain disulfides connect cysteine 45–cysteine 113, cysteine 53–cysteine 107, cysteine 54–cysteine 88, and cysteine 114–cysteine 133.

It belongs to the fungal hydrophobin family. Self-assembles to form functional amyloid fibrils called rodlets. Self-assembly into fibrillar rodlets occurs spontaneously at hydrophobic:hydrophilic interfaces and the rodlets further associate laterally to form amphipathic monolayers.

The protein resides in the secreted. The protein localises to the cell wall. Its function is as follows. Aerial growth, conidiation, and dispersal of filamentous fungi in the environment rely upon a capability of their secreting small amphipathic proteins called hydrophobins (HPBs) with low sequence identity. Class I can self-assemble into an outermost layer of rodlet bundles on aerial cell surfaces, conferring cellular hydrophobicity that supports fungal growth, development and dispersal; whereas Class II form highly ordered films at water-air interfaces through intermolecular interactions but contribute nothing to the rodlet structure. HYPA is a class I hydrophobin that contributes to surface hydrophobicity, and prevents recognition by the cellular immune defense system. The chain is Class I hydrophobin A from Arthroderma benhamiae (strain ATCC MYA-4681 / CBS 112371) (Trichophyton mentagrophytes).